Here is a 95-residue protein sequence, read N- to C-terminus: Defensin alpha 4 (95 aa).

The first 19 residues, 1 to 19, serve as a signal peptide directing secretion; sequence MRTLALLAAILLVALQAQA. Positions 20–62 are excised as a propeptide; it reads EHISVSIDEVVDQQPPQAEDQDVAIYVKEHESSALEALGVKAG. Cystine bridges form between Cys-65/Cys-93, Cys-67/Cys-82, and Cys-72/Cys-92.

It belongs to the alpha-defensin family.

It is found in the secreted. In terms of biological role, host-defense peptide that has antimicrobial activity. Inhibits corticotropin (ACTH)-stimulated corticosterone production (in vitro). This is Defensin alpha 4 from Oryctolagus cuniculus (Rabbit).